The chain runs to 285 residues: Methylamine utilization protein MauF (285 aa).

The next 7 helical transmembrane spans lie at 39–59, 60–80, 119–139, 145–165, 188–208, 212–232, and 265–285; these read FIMM…MHST, MSVE…GGLL, YAIG…LLFA, YAVI…FGFL, VIGL…VQTP, IVTG…VIAV, and VEVD…LVML.

The protein resides in the cell membrane. The protein operates within one-carbon metabolism; methylamine degradation. In Methylophilus methylotrophus (Bacterium W3A1), this protein is Methylamine utilization protein MauF (mauF).